A 77-amino-acid polypeptide reads, in one-letter code: UPF0349 protein lin2491 (77 aa).

The protein belongs to the UPF0349 family.

This is UPF0349 protein lin2491 from Listeria innocua serovar 6a (strain ATCC BAA-680 / CLIP 11262).